Here is a 197-residue protein sequence, read N- to C-terminus: Adenylate kinase (197 aa).

19-24 provides a ligand contact to ATP; sequence GSGKGT. Residues 39 to 68 form an NMP region; it reads SSGDLLRAEVQSGSPKGKELKAMMERGELV. AMP-binding positions include S40, R45, 66 to 68, 95 to 98, and Q102; these read ELV and RYPR. Residues 132–142 are LID; the sequence is KRAETSNRVDD. R133 contacts ATP. AMP contacts are provided by R139 and R150. G178 is a binding site for ATP.

It belongs to the adenylate kinase family. In terms of assembly, monomer.

It is found in the cytoplasm. It catalyses the reaction AMP + ATP = 2 ADP. Catalyzes the reversible transfer of the terminal phosphate group between ATP and AMP. Plays an important role in cellular energy homeostasis and in adenine nucleotide metabolism. The sequence is that of Adenylate kinase from Schistosoma mansoni (Blood fluke).